Reading from the N-terminus, the 92-residue chain is Protein S100-B (92 aa).

Position 2 is an N-acetylserine (S2). 2 EF-hand domains span residues 13-48 (DVFHQYSGREGDKHKLKKSELKELINNELSHFLEEI) and 49-84 (KEQEVVDKVMETLDSDGDGECDFQEFMAFVAMITTA). H16 contributes to the Zn(2+) binding site. Ca(2+)-binding residues include S19, E22, and D24. Position 26 (H26) interacts with Zn(2+). Residues D62, D64, D66, E68, and E73 each coordinate Ca(2+). Zn(2+) contacts are provided by H86 and H91.

This sequence belongs to the S-100 family. As to quaternary structure, dimer of either two alpha chains, or two beta chains, or one alpha and one beta chain. The S100B dimer binds two molecules of STK38. Interacts with CACYBP in a calcium-dependent manner. Interacts with ATAD3A; this interaction probably occurs in the cytosol prior to ATAD3A mitochondrial targeting. Interacts with S100A6. The S100B dimer interacts with two molecules of CAPZA1. Interacts with AGER. Interacts with PPP5C (via TPR repeats); the interaction is calcium-dependent and modulates PPP5C activity. Interacts with TPPP; this interaction inhibits TPPP dimerization. Interacts with isoform CLSTN3beta of CLSTN3; interaction promotes secretion.

It is found in the cytoplasm. Its subcellular location is the nucleus. The protein resides in the secreted. In terms of biological role, small zinc- and- and calcium-binding protein that is highly expressed in astrocytes and constitutes one of the most abundant soluble proteins in brain. Weakly binds calcium but binds zinc very tightly-distinct binding sites with different affinities exist for both ions on each monomer. Physiological concentrations of potassium ion antagonize the binding of both divalent cations, especially affecting high-affinity calcium-binding sites. Acts as a neurotrophic factor that promotes astrocytosis and axonal proliferation. Involved in innervation of thermogenic adipose tissue by acting as an adipocyte-derived neurotrophic factor that promotes sympathetic innervation of adipose tissue. Binds to and initiates the activation of STK38 by releasing autoinhibitory intramolecular interactions within the kinase. Interaction with AGER after myocardial infarction may play a role in myocyte apoptosis by activating ERK1/2 and p53/TP53 signaling. Could assist ATAD3A cytoplasmic processing, preventing aggregation and favoring mitochondrial localization. May mediate calcium-dependent regulation on many physiological processes by interacting with other proteins, such as TPR-containing proteins, and modulating their activity. The sequence is that of Protein S100-B (S100B) from Bos taurus (Bovine).